Here is a 164-residue protein sequence, read N- to C-terminus: FMN reductase (NADH) RutF (164 aa).

This sequence belongs to the non-flavoprotein flavin reductase family. RutF subfamily.

The enzyme catalyses FMNH2 + NAD(+) = FMN + NADH + 2 H(+). In terms of biological role, catalyzes the reduction of FMN to FMNH2 which is used to reduce pyrimidine by RutA via the Rut pathway. The sequence is that of FMN reductase (NADH) RutF from Shigella flexneri serotype X (strain 2002017).